Here is a 467-residue protein sequence, read N- to C-terminus: MADGSSETKSSNQMWGGRFASGPDAIMEEINASIGFDKKLYAQDIRGSIAHATMLAHKGIISAEDKDKIVHGLETILSEIESGAFDFSRRLEDIHMNIEARLASLIGPAAGRLHTARSRNDQVALDFRLWVKEELQRTEKALTGLIGAFLDRAEEHAGTVMPGFTHLQTAQPVTFGHHCMAYVEMFGRDRSRVRHAIEHMDESPIGAAALAGTGFPIDRHMTAKALGFREPTRNSIDTVSDRDFALEFLSIASIAATHLSRLAEEIVIWSTPQFGFIRLSDAFSTGSSIMPQKKNPDAAELVRAKTGRINGSLIALLTVMKGLPLAYSKDMQEDKEQVFDAAESLELAIAAMTGMVRDMTVRADRMKAAAGSGYSTATDLADWLVREAGLPFRDAHHVTGRAVALAEQKGCDLADLSLADLQAINPAITDKVFDVLTVEASVASRTSFGGTAPAEVRKQIAWWRARN.

This sequence belongs to the lyase 1 family. Argininosuccinate lyase subfamily.

Its subcellular location is the cytoplasm. It catalyses the reaction 2-(N(omega)-L-arginino)succinate = fumarate + L-arginine. It functions in the pathway amino-acid biosynthesis; L-arginine biosynthesis; L-arginine from L-ornithine and carbamoyl phosphate: step 3/3. The protein is Argininosuccinate lyase of Sinorhizobium fredii (strain NBRC 101917 / NGR234).